The primary structure comprises 228 residues: Cytidylate kinase (228 aa).

12–20 (GPSGAGKGT) is a binding site for ATP.

It belongs to the cytidylate kinase family. Type 1 subfamily.

The protein localises to the cytoplasm. The catalysed reaction is CMP + ATP = CDP + ADP. It carries out the reaction dCMP + ATP = dCDP + ADP. The polypeptide is Cytidylate kinase (Photobacterium profundum (strain SS9)).